The primary structure comprises 247 residues: MyoD family inhibitor domain-containing protein (247 aa).

2 disordered regions span residues 1-67 (MSCA…NPSA) and 80-110 (QLQT…GNGI). The 174-residue stretch at 74 to 247 (QPERLPQLQT…MECCGICFPS (174 aa)) folds into the MDFI domain. S129 and S141 each carry phosphoserine.

It belongs to the MDFI family. As to quaternary structure, interacts with HAND1; the interaction sequesters Hand1 into the nucleolus and inhibits its activity. Interacts (via C-terminus) with ZIC2. Interacts (via C-terminus) with AXIN1, the histidine-rich region of CCNT1/cyclin-T and weakly with LEF1. Interacts with CCNT2. Interacts with GATA2. Interacts (via C-terminus) with Piezo channel composed of PIEZO1 or PIEZO2; the interaction prolongs Piezo channel inactivation. Palmitoylated. As to expression, in the embryo, robust expression is detected between 16.5 and 18.5 dpc in lung, kidney, and salivary glands. In the developing cardiovascular system, it is detected in lymphatic and cardiac valves (at protein level).

The protein resides in the cytoplasm. Its subcellular location is the secreted. In terms of biological role, required to control the activity of various transcription factors through their sequestration in the cytoplasm. Retains nuclear Zic proteins ZIC1, ZIC2 and ZIC3 in the cytoplasm and inhibits their transcriptional activation. Modulates the expression from cellular promoters. Binds to the axin complex, resulting in an increase in the level of free beta-catenin. Affects axin-regulation of the WNT and JNK signaling pathways. Involved in the development of lymphatic vessel valves. Required to promote lymphatic endothelial cell migration, in a process that involves down-regulation of integrin beta 1 activation and control of cell adhesion to the extracellular matrix. Regulates the activity of mechanosensitive Piezo channel. The sequence is that of MyoD family inhibitor domain-containing protein from Mus musculus (Mouse).